A 212-amino-acid chain; its full sequence is ATP-dependent Clp protease proteolytic subunit (212 aa).

The Nucleophile role is filled by S113. H138 is an active-site residue.

Belongs to the peptidase S14 family. Fourteen ClpP subunits assemble into 2 heptameric rings which stack back to back to give a disk-like structure with a central cavity, resembling the structure of eukaryotic proteasomes.

The protein resides in the cytoplasm. It carries out the reaction Hydrolysis of proteins to small peptides in the presence of ATP and magnesium. alpha-casein is the usual test substrate. In the absence of ATP, only oligopeptides shorter than five residues are hydrolyzed (such as succinyl-Leu-Tyr-|-NHMec, and Leu-Tyr-Leu-|-Tyr-Trp, in which cleavage of the -Tyr-|-Leu- and -Tyr-|-Trp bonds also occurs).. Its function is as follows. Cleaves peptides in various proteins in a process that requires ATP hydrolysis. Has a chymotrypsin-like activity. Plays a major role in the degradation of misfolded proteins. The chain is ATP-dependent Clp protease proteolytic subunit from Saccharophagus degradans (strain 2-40 / ATCC 43961 / DSM 17024).